The sequence spans 695 residues: Threonine--tRNA ligase (695 aa).

One can recognise a TGS domain in the interval 1 to 66; the sequence is MSAPARPAPA…DTDVEVTPVA (66 aa). A catalytic region spans residues 263–569; that stretch reads DHRKLGVELD…LTEHYAGAFP (307 aa). Zn(2+)-binding residues include C368, H419, and H546.

Belongs to the class-II aminoacyl-tRNA synthetase family. Homodimer. Zn(2+) is required as a cofactor.

It localises to the cytoplasm. The catalysed reaction is tRNA(Thr) + L-threonine + ATP = L-threonyl-tRNA(Thr) + AMP + diphosphate + H(+). In terms of biological role, catalyzes the attachment of threonine to tRNA(Thr) in a two-step reaction: L-threonine is first activated by ATP to form Thr-AMP and then transferred to the acceptor end of tRNA(Thr). Also edits incorrectly charged L-seryl-tRNA(Thr). This is Threonine--tRNA ligase from Mycolicibacterium gilvum (strain PYR-GCK) (Mycobacterium gilvum (strain PYR-GCK)).